Reading from the N-terminus, the 411-residue chain is uncharacterized protein (411 aa).

It in the C-terminal section; belongs to the PAPS reductase family.

This is an uncharacterized protein from Methanocaldococcus jannaschii (strain ATCC 43067 / DSM 2661 / JAL-1 / JCM 10045 / NBRC 100440) (Methanococcus jannaschii).